Here is a 344-residue protein sequence, read N- to C-terminus: Phosphate acyltransferase (344 aa).

This sequence belongs to the PlsX family. In terms of assembly, homodimer. Probably interacts with PlsY.

Its subcellular location is the cytoplasm. It carries out the reaction a fatty acyl-[ACP] + phosphate = an acyl phosphate + holo-[ACP]. Its pathway is lipid metabolism; phospholipid metabolism. In terms of biological role, catalyzes the reversible formation of acyl-phosphate (acyl-PO(4)) from acyl-[acyl-carrier-protein] (acyl-ACP). This enzyme utilizes acyl-ACP as fatty acyl donor, but not acyl-CoA. The chain is Phosphate acyltransferase from Acaryochloris marina (strain MBIC 11017).